Reading from the N-terminus, the 177-residue chain is ATP synthase subunit delta (177 aa).

The protein belongs to the ATPase delta chain family. F-type ATPases have 2 components, F(1) - the catalytic core - and F(0) - the membrane proton channel. F(1) has five subunits: alpha(3), beta(3), gamma(1), delta(1), epsilon(1). F(0) has three main subunits: a(1), b(2) and c(10-14). The alpha and beta chains form an alternating ring which encloses part of the gamma chain. F(1) is attached to F(0) by a central stalk formed by the gamma and epsilon chains, while a peripheral stalk is formed by the delta and b chains.

The protein resides in the cell inner membrane. Functionally, f(1)F(0) ATP synthase produces ATP from ADP in the presence of a proton or sodium gradient. F-type ATPases consist of two structural domains, F(1) containing the extramembraneous catalytic core and F(0) containing the membrane proton channel, linked together by a central stalk and a peripheral stalk. During catalysis, ATP synthesis in the catalytic domain of F(1) is coupled via a rotary mechanism of the central stalk subunits to proton translocation. In terms of biological role, this protein is part of the stalk that links CF(0) to CF(1). It either transmits conformational changes from CF(0) to CF(1) or is implicated in proton conduction. The sequence is that of ATP synthase subunit delta from Enterobacter sp. (strain 638).